Here is a 954-residue protein sequence, read N- to C-terminus: Glycine dehydrogenase (decarboxylating) (954 aa).

At lysine 706 the chain carries N6-(pyridoxal phosphate)lysine.

The protein belongs to the GcvP family. As to quaternary structure, the glycine cleavage system is composed of four proteins: P, T, L and H. Requires pyridoxal 5'-phosphate as cofactor.

The catalysed reaction is N(6)-[(R)-lipoyl]-L-lysyl-[glycine-cleavage complex H protein] + glycine + H(+) = N(6)-[(R)-S(8)-aminomethyldihydrolipoyl]-L-lysyl-[glycine-cleavage complex H protein] + CO2. Functionally, the glycine cleavage system catalyzes the degradation of glycine. The P protein binds the alpha-amino group of glycine through its pyridoxal phosphate cofactor; CO(2) is released and the remaining methylamine moiety is then transferred to the lipoamide cofactor of the H protein. In Pseudomonas syringae pv. syringae (strain B728a), this protein is Glycine dehydrogenase (decarboxylating).